A 127-amino-acid polypeptide reads, in one-letter code: Large ribosomal subunit protein uL24B (127 aa).

The protein belongs to the universal ribosomal protein uL24 family. In terms of assembly, component of the large ribosomal subunit (LSU). Mature yeast ribosomes consist of a small (40S) and a large (60S) subunit. The 40S small subunit contains 1 molecule of ribosomal RNA (18S rRNA) and 33 different proteins (encoded by 57 genes). The large 60S subunit contains 3 rRNA molecules (25S, 5.8S and 5S rRNA) and 46 different proteins (encoded by 81 genes).

It localises to the cytoplasm. Functionally, component of the ribosome, a large ribonucleoprotein complex responsible for the synthesis of proteins in the cell. The small ribosomal subunit (SSU) binds messenger RNAs (mRNAs) and translates the encoded message by selecting cognate aminoacyl-transfer RNA (tRNA) molecules. The large subunit (LSU) contains the ribosomal catalytic site termed the peptidyl transferase center (PTC), which catalyzes the formation of peptide bonds, thereby polymerizing the amino acids delivered by tRNAs into a polypeptide chain. The nascent polypeptides leave the ribosome through a tunnel in the LSU and interact with protein factors that function in enzymatic processing, targeting, and the membrane insertion of nascent chains at the exit of the ribosomal tunnel. This Saccharomyces cerevisiae (strain ATCC 204508 / S288c) (Baker's yeast) protein is Large ribosomal subunit protein uL24B.